Here is a 158-residue protein sequence, read N- to C-terminus: Transcriptional repressor NrdR (158 aa).

Positions 1–22 (MRCPYCGSEDTQVKDSRPAEDN) are disordered. Residues 3–34 (CPYCGSEDTQVKDSRPAEDNTSIRRRRICPDC) fold into a zinc finger. Basic and acidic residues predominate over residues 11–22 (TQVKDSRPAEDN). The ATP-cone domain occupies 49–139 (LMVIKKTGRK…VYRDFSHAED (91 aa)).

Belongs to the NrdR family. Zn(2+) serves as cofactor.

Its function is as follows. Negatively regulates transcription of bacterial ribonucleotide reductase nrd genes and operons by binding to NrdR-boxes. This Rhizobium rhizogenes (strain K84 / ATCC BAA-868) (Agrobacterium radiobacter) protein is Transcriptional repressor NrdR.